Here is a 767-residue protein sequence, read N- to C-terminus: MEGVYSAEAVIDNGRFGTRTIRFETGRLARQATGSATAYLDDETMVLSATTVSKRPKEALDFFPLTVDVEERMYAAGRIPGSFFRREGRPSEDAILTCRLIDRPLRPSFQKGLRNEIQIVATVLALHPDHLYDVIAINAASMSTQLAGLPFSGPIGGVRVALVEGQWVAFPTHSELANATFDMVVAGRVLDNGDVAIMMVEAESTPHTLRLVAEGAIGPNEQTVAEGLEAAKPFIKVLCRAQQTVAEAAGKPPGEYPIFIDYQDDAYAAVEEAIHDELAAALTIADKQEREAELDRVKALVAEKLAEDFEGREKELAAAFRALTRKLVRERIVKDGVRIDGRGVKDIRSLTAEVNVIPRVHGSALFERGETQILGITTLNMLRMEQTIDTLNPERTKRYMHNYNFPPYSTGETGRVGAPKRREIGHGALAERALVPVLPSREEFPYAIRQVSEAIGSNGSTSMGSVCASTMSLMAAGVPLKDMVAGIAMGLIYEDGKYVTLTDILGAEDAYGDMDFKVAGTRDLITALQLDTKLDGIPAEVLASALQQARGARLAILDVMSEAINRPAEISPHAPRILTVKVPIDKIGEVIGPKGKMINSIQDETGAEITIEDDGTIYIGATDGPSAEAARDAINSIANPTMPEVGERYLGTVVKTTAFGAFVSLLPGKDGLLHISQIRKMHGGQRIENVEDVISIGEKIHVEVRDIDERGKLSLVPVEVIEAEAVAAPNGGESPNGAKKTDASGNGAKQPRRRRRTRSSSRSSENT.

Positions 509 and 515 each coordinate Mg(2+). The region spanning 575 to 634 is the KH domain; that stretch reads PRILTVKVPIDKIGEVIGPKGKMINSIQDETGAEITIEDDGTIYIGATDGPSAEAARDAI. Residues 646-718 enclose the S1 motif domain; that stretch reads GERYLGTVVK…ERGKLSLVPV (73 aa). A disordered region spans residues 725–767; the sequence is AVAAPNGGESPNGAKKTDASGNGAKQPRRRRRTRSSSRSSENT. A compositionally biased stretch (basic residues) spans 750–759; the sequence is QPRRRRRTRS.

The protein belongs to the polyribonucleotide nucleotidyltransferase family. The cofactor is Mg(2+).

It localises to the cytoplasm. It carries out the reaction RNA(n+1) + phosphate = RNA(n) + a ribonucleoside 5'-diphosphate. Functionally, involved in mRNA degradation. Catalyzes the phosphorolysis of single-stranded polyribonucleotides processively in the 3'- to 5'-direction. This Thermobifida fusca (strain YX) protein is Polyribonucleotide nucleotidyltransferase.